The sequence spans 229 residues: Potassium/proton antiporter CemA (229 aa).

4 helical membrane passes run 7–27, 114–134, 145–165, and 189–209; these read FTSL…SLSF, IICF…LVIL, LSDT…IGFH, and ILSS…KFWV.

The protein belongs to the CemA family.

The protein localises to the plastid. It localises to the chloroplast inner membrane. It carries out the reaction K(+)(in) + H(+)(out) = K(+)(out) + H(+)(in). In terms of biological role, contributes to K(+)/H(+) antiport activity by supporting proton efflux to control proton extrusion and homeostasis in chloroplasts in a light-dependent manner to modulate photosynthesis. Prevents excessive induction of non-photochemical quenching (NPQ) under continuous-light conditions. Indirectly promotes efficient inorganic carbon uptake into chloroplasts. The chain is Potassium/proton antiporter CemA from Daucus carota (Wild carrot).